Reading from the N-terminus, the 843-residue chain is Protein translocase subunit SecA (843 aa).

ATP contacts are provided by residues Gln-85, 103 to 107, and Asp-490; that span reads GEGKT. Residues 799 to 834 are disordered; sequence KNAVENRSDDSLPKQPVKAEPRVGRNDPCPCGSGKK. The span at 802–823 shows a compositional bias: basic and acidic residues; that stretch reads VENRSDDSLPKQPVKAEPRVGR. 4 residues coordinate Zn(2+): Cys-827, Cys-829, Cys-838, and Cys-839.

Belongs to the SecA family. As to quaternary structure, monomer and homodimer. Part of the essential Sec protein translocation apparatus which comprises SecA, SecYEG and auxiliary proteins SecDF. Other proteins may also be involved. It depends on Zn(2+) as a cofactor.

Its subcellular location is the cell membrane. The protein localises to the cytoplasm. The enzyme catalyses ATP + H2O + cellular proteinSide 1 = ADP + phosphate + cellular proteinSide 2.. Part of the Sec protein translocase complex. Interacts with the SecYEG preprotein conducting channel. Has a central role in coupling the hydrolysis of ATP to the transfer of proteins into and across the cell membrane, serving as an ATP-driven molecular motor driving the stepwise translocation of polypeptide chains across the membrane. The chain is Protein translocase subunit SecA from Heliobacterium modesticaldum (strain ATCC 51547 / Ice1).